Here is a 401-residue protein sequence, read N- to C-terminus: MHIKTLTVSQLNRYVKNTLDADFILNNASVKGEISNLKIHSSGHIYFSLKDGGSKINCVMFKSYAYNLKFAPENGMDVVALGNVSVYEKEGSYQLYVKDMKREGIGDLYVAFEKLKEKLKEEELFDDVHKKEIPKFSKKVGVITSPTGAALKDIINVTKRRNKGIELLIYPALVQGTDASRTLIEGIKILNKVEDVDIIILARGGGSIEELWAFNNEELAYAVYNSKKPIITGVGHETDFTIVDFVSDRRAPTPSAAAEIAVFDREVLINEILNYKYNIKNYMENIIKEKRNYLNLYKQKIEANSPTNIIVNEYKNIDNLKELLNMKIEGKLNKEKNNLSRLSSLLEAHNPLNVLKKGYTLIEDEGNNLITEKEALKKLNKINIIFKDGRAKLSIEYIEEF.

It belongs to the XseA family. As to quaternary structure, heterooligomer composed of large and small subunits.

Its subcellular location is the cytoplasm. The catalysed reaction is Exonucleolytic cleavage in either 5'- to 3'- or 3'- to 5'-direction to yield nucleoside 5'-phosphates.. Functionally, bidirectionally degrades single-stranded DNA into large acid-insoluble oligonucleotides, which are then degraded further into small acid-soluble oligonucleotides. The protein is Exodeoxyribonuclease 7 large subunit of Clostridium botulinum (strain Langeland / NCTC 10281 / Type F).